Reading from the N-terminus, the 425-residue chain is Glucan 1,3-beta-glucosidase (425 aa).

Residues 1-19 (MNLTLLLLALIFSPSLIFS) form the signal peptide. Catalysis depends on Glu219, which acts as the Proton donor. 2 disulfides stabilise this stretch: Cys301–Cys423 and Cys326–Cys352. Catalysis depends on Glu318, which acts as the Nucleophile.

It belongs to the glycosyl hydrolase 5 (cellulase A) family.

The protein resides in the secreted. It catalyses the reaction Successive hydrolysis of beta-D-glucose units from the non-reducing ends of (1-&gt;3)-beta-D-glucans, releasing alpha-glucose.. Beta-glucanases participate in the metabolism of beta-glucan, the main structural component of the cell wall. It could also function biosynthetically as a transglycosylase. The protein is Glucan 1,3-beta-glucosidase of Schwanniomyces occidentalis (Yeast).